Here is a 972-residue protein sequence, read N- to C-terminus: RNA polymerase-associated protein RapA (972 aa).

Residues 164–334 form the Helicase ATP-binding domain; sequence EVGRRYAPRV…FARLRLLDPD (171 aa). 177–184 contacts ATP; that stretch reads DEVGLGKT. The DEAH box signature appears at 280–283; it reads DEAH. The Helicase C-terminal domain occupies 493 to 671; the sequence is RVNWLLEMLK…HEPEALENLI (179 aa).

The protein belongs to the SNF2/RAD54 helicase family. RapA subfamily. As to quaternary structure, interacts with the RNAP. Has a higher affinity for the core RNAP than for the holoenzyme. Its ATPase activity is stimulated by binding to RNAP.

In terms of biological role, transcription regulator that activates transcription by stimulating RNA polymerase (RNAP) recycling in case of stress conditions such as supercoiled DNA or high salt concentrations. Probably acts by releasing the RNAP, when it is trapped or immobilized on tightly supercoiled DNA. Does not activate transcription on linear DNA. Probably not involved in DNA repair. The polypeptide is RNA polymerase-associated protein RapA (Photobacterium profundum (strain SS9)).